We begin with the raw amino-acid sequence, 345 residues long: Protein GAMETE CELL DEFECTIVE 1, mitochondrial (345 aa).

The N-terminal 43 residues, 1 to 43, are a transit peptide targeting the mitochondrion; the sequence is MLALRKTLLHGRLPAAPPAAAAAAIASRIPALLRRLSSSPGDG. The segment at 36 to 81 is disordered; that stretch reads LSSSPGDGQGGDEWGSSWSTGITKEHFDGSDAAVGRPVTSPSKPVS.

In terms of tissue distribution, expressed in roots, stems, leaves and florets.

The protein resides in the mitochondrion. In terms of biological role, essential for fertility (male and female gametophyte functions and development). Required for the integrity of female gametic mitochondria. Involved in embryo apical-basal patterning, and particularly dorsal-ventral patterning, during early embryogenesis, and endosperm free nucleus positioning and development as well as early endosperm development, probably by modulating the expression pattern of related genes (e.g. AL1, MYB3/AL2, CYP78A13/GE, PNH1, HAZ1, MPK6 and OSH1). Has function in triggering of endosperm programmed cell death (PCD) leading to syncytial endosperm cellularization and starchy endosperm cell maturation. Implicated in central vacuole dynamics necessary for microspore development leading to pollen production, and for pollen development and germination. The protein is Protein GAMETE CELL DEFECTIVE 1, mitochondrial of Oryza sativa subsp. japonica (Rice).